Here is a 561-residue protein sequence, read N- to C-terminus: Arginine--tRNA ligase (561 aa).

Positions 129-139 (ANPTGPLHIGH) match the 'HIGH' region motif.

The protein belongs to the class-I aminoacyl-tRNA synthetase family. As to quaternary structure, monomer.

Its subcellular location is the cytoplasm. The enzyme catalyses tRNA(Arg) + L-arginine + ATP = L-arginyl-tRNA(Arg) + AMP + diphosphate. In Geotalea daltonii (strain DSM 22248 / JCM 15807 / FRC-32) (Geobacter daltonii), this protein is Arginine--tRNA ligase.